A 506-amino-acid polypeptide reads, in one-letter code: Maturase K (506 aa).

The protein belongs to the intron maturase 2 family. MatK subfamily.

It localises to the plastid. The protein resides in the chloroplast. Usually encoded in the trnK tRNA gene intron. Probably assists in splicing its own and other chloroplast group II introns. The protein is Maturase K of Jurinea cyanoides.